Consider the following 412-residue polypeptide: CinA-like protein (412 aa).

Belongs to the CinA family.

In Syntrophotalea carbinolica (strain DSM 2380 / NBRC 103641 / GraBd1) (Pelobacter carbinolicus), this protein is CinA-like protein.